Consider the following 254-residue polypeptide: Sec-independent protein translocase protein TatC (254 aa).

A run of 6 helical transmembrane segments spans residues Ile40–Pro60, Phe82–Tyr104, Val125–Ile145, Phe172–Val192, Phe210–Thr230, and Leu233–Gly253.

It belongs to the TatC family. Forms a complex with TatA.

Its subcellular location is the cell inner membrane. In terms of biological role, part of the twin-arginine translocation (Tat) system that transports large folded proteins containing a characteristic twin-arginine motif in their signal peptide across membranes. The protein is Sec-independent protein translocase protein TatC of Synechocystis sp. (strain ATCC 27184 / PCC 6803 / Kazusa).